A 487-amino-acid chain; its full sequence is NGFI-A-binding protein 1 (487 aa).

Positions 4-82 are NCD1; that stretch reads ALPRTLGELQ…RDWVTNPGLF (79 aa). Glycyl lysine isopeptide (Lys-Gly) (interchain with G-Cter in SUMO2) cross-links involve residues lysine 126, lysine 129, and lysine 143. Positions 162–188 are disordered; sequence QGHHATESEHSLSPADLGSPASPKESS. Phosphoserine occurs at positions 172 and 183. Lysine 212 participates in a covalent cross-link: Glycyl lysine isopeptide (Lys-Gly) (interchain with G-Cter in SUMO2). The interval 221–310 is NCD2; the sequence is LLKTNKKLAK…ARQISREVTY (90 aa). The tract at residues 307 to 338 is necessary for nuclear localization; sequence EVTYKYTYRTTKSKCGERDELSPKRIKVEDGF. The residue at position 328 (serine 328) is a Phosphoserine. Residue lysine 333 forms a Glycyl lysine isopeptide (Lys-Gly) (interchain with G-Cter in SUMO1); alternate linkage. Residue lysine 333 forms a Glycyl lysine isopeptide (Lys-Gly) (interchain with G-Cter in SUMO2); alternate linkage. Residues lysine 355, lysine 369, and lysine 373 each participate in a glycyl lysine isopeptide (Lys-Gly) (interchain with G-Cter in SUMO2) cross-link. Residues 399–434 are disordered; the sequence is YRQSSEEHSPNGLTSDNSDGQGERPLNLRMPNLQNR. A Phosphoserine modification is found at serine 407. The segment covering 409-418 has biased composition (polar residues); the sequence is NGLTSDNSDG. Glycyl lysine isopeptide (Lys-Gly) (interchain with G-Cter in SUMO2) cross-links involve residues lysine 454, lysine 465, and lysine 477. Residue lysine 480 forms a Glycyl lysine isopeptide (Lys-Gly) (interchain with G-Cter in SUMO1); alternate linkage. Lysine 480 is covalently cross-linked (Glycyl lysine isopeptide (Lys-Gly) (interchain with G-Cter in SUMO2); alternate).

Belongs to the NAB family. As to quaternary structure, homomultimers may associate with EGR1 bound to DNA. In terms of tissue distribution, isoform Short is found in myeloid leukemia cell line KG-1.

The protein resides in the nucleus. Functionally, acts as a transcriptional repressor for zinc finger transcription factors EGR1 and EGR2. This is NGFI-A-binding protein 1 (NAB1) from Homo sapiens (Human).